Here is a 154-residue protein sequence, read N- to C-terminus: Small ribosomal subunit protein uS9 (154 aa).

Positions 133–154 (RAKESKKYGLKKARKAPQYSKR) are disordered. Residues 140–154 (YGLKKARKAPQYSKR) are compositionally biased toward basic residues.

This sequence belongs to the universal ribosomal protein uS9 family.

This Salinispora tropica (strain ATCC BAA-916 / DSM 44818 / JCM 13857 / NBRC 105044 / CNB-440) protein is Small ribosomal subunit protein uS9.